Reading from the N-terminus, the 191-residue chain is Protein GrpE (191 aa).

A disordered region spans residues 1 to 22; the sequence is MKDKHNQEHDHLSQEEPESCEK.

The protein belongs to the GrpE family. Homodimer.

Its subcellular location is the cytoplasm. Functionally, participates actively in the response to hyperosmotic and heat shock by preventing the aggregation of stress-denatured proteins, in association with DnaK and GrpE. It is the nucleotide exchange factor for DnaK and may function as a thermosensor. Unfolded proteins bind initially to DnaJ; upon interaction with the DnaJ-bound protein, DnaK hydrolyzes its bound ATP, resulting in the formation of a stable complex. GrpE releases ADP from DnaK; ATP binding to DnaK triggers the release of the substrate protein, thus completing the reaction cycle. Several rounds of ATP-dependent interactions between DnaJ, DnaK and GrpE are required for fully efficient folding. The protein is Protein GrpE of Helicobacter pylori (strain Shi470).